We begin with the raw amino-acid sequence, 61 residues long: Small ribosomal subunit protein uS14B (61 aa).

C24, C27, C40, and C43 together coordinate Zn(2+).

This sequence belongs to the universal ribosomal protein uS14 family. Zinc-binding uS14 subfamily. As to quaternary structure, part of the 30S ribosomal subunit. Contacts proteins S3 and S10. Zn(2+) is required as a cofactor.

Functionally, binds 16S rRNA, required for the assembly of 30S particles and may also be responsible for determining the conformation of the 16S rRNA at the A site. This Listeria welshimeri serovar 6b (strain ATCC 35897 / DSM 20650 / CCUG 15529 / CIP 8149 / NCTC 11857 / SLCC 5334 / V8) protein is Small ribosomal subunit protein uS14B.